The sequence spans 104 residues: Nucleoid-associated protein EF_2780 (104 aa).

This sequence belongs to the YbaB/EbfC family. In terms of assembly, homodimer.

The protein resides in the cytoplasm. The protein localises to the nucleoid. In terms of biological role, binds to DNA and alters its conformation. May be involved in regulation of gene expression, nucleoid organization and DNA protection. This chain is Nucleoid-associated protein EF_2780, found in Enterococcus faecalis (strain ATCC 700802 / V583).